The chain runs to 310 residues: Homoserine kinase (310 aa).

91–101 (PIGSGLGSSAC) contacts ATP.

This sequence belongs to the GHMP kinase family. Homoserine kinase subfamily.

It is found in the cytoplasm. It catalyses the reaction L-homoserine + ATP = O-phospho-L-homoserine + ADP + H(+). It functions in the pathway amino-acid biosynthesis; L-threonine biosynthesis; L-threonine from L-aspartate: step 4/5. In terms of biological role, catalyzes the ATP-dependent phosphorylation of L-homoserine to L-homoserine phosphate. The protein is Homoserine kinase of Escherichia coli (strain SE11).